Reading from the N-terminus, the 557-residue chain is NADP-dependent malic enzyme (557 aa).

Catalysis depends on Tyr-91, which acts as the Proton donor. An NADP(+)-binding site is contributed by Arg-144. Substrate contacts are provided by Arg-144 and Lys-162. The Proton acceptor role is filled by Lys-162. Residues Glu-234 and Asp-235 each coordinate Mn(2+). Asn-238 lines the NADP(+) pocket. Asp-258 provides a ligand contact to Mn(2+). NADP(+) is bound by residues 291 to 294 (AGEA), Ser-325, Asn-397, and Asn-443. Asn-443 provides a ligand contact to substrate.

It belongs to the malic enzymes family. Homotetramer. Requires Mg(2+) as cofactor. The cofactor is Mn(2+). In terms of processing, the N-terminus is blocked.

The protein resides in the cytoplasm. It catalyses the reaction (S)-malate + NADP(+) = pyruvate + CO2 + NADPH. It carries out the reaction oxaloacetate + H(+) = pyruvate + CO2. The polypeptide is NADP-dependent malic enzyme (ME1) (Columba livia (Rock dove)).